We begin with the raw amino-acid sequence, 548 residues long: MDSQRNLLVIALLFVSFMIWQAWEQDKNPQPQTQQTTQTTTTAAGSAADQGVPASGQGKMITVKTDVLDLTINTRGGDVEQALLPAYPKELGSNEPFQLLETTPQFIYQAQSGLTGRDGPDNPANGPRPLYNVEKDAFVLADGQNELQVPMTYTDAAGNTFTKTFVFKRGDYAVNVNYSVQNAGEKPLEVSTFGQLKQSVNLPPHRDTGSSNFALHTFRGAAYSTPDEKYEKYKFDTIADNENLNVSSKGGWVAMLQQYFATAWIPRNDGTNNFYTANLGNGIVAIGYKAQPVLVQPGQTGAMTSTLWVGPEIQDKMAAVAPHLDLTVDYGWLWFISQPLFKLLKWIHSFVGNWGFSIIIITFIVRGIMYPLTKAQYTSMAKMRMLQPKIQAMRERLGDDKQRQSQEMMALYKAEKVNPLGGCFPLIIQMPIFLALYYMLMGSIELRHAPFALWIHDLSAQDPYYILPILMGVTMFFIQKMSPTTVTDPMQQKIMTFMPVIFTVFFLWFPSGLVLYYIVSNLVTIIQQQLIYRGLEKRGLHSREKKKS.

A helical membrane pass occupies residues 6–26; it reads NLLVIALLFVSFMIWQAWEQD. The disordered stretch occupies residues 28–56; sequence NPQPQTQQTTQTTTTAAGSAADQGVPASG. Positions 29-42 are enriched in low complexity; the sequence is PQPQTQQTTQTTTT. A run of 4 helical transmembrane segments spans residues 350–370, 424–444, 458–478, and 499–519; these read FVGNWGFSIIIITFIVRGIMY, FPLIIQMPIFLALYYMLMGSI, LSAQDPYYILPILMGVTMFFI, and PVIFTVFFLWFPSGLVLYYIV.

It belongs to the OXA1/ALB3/YidC family. Type 1 subfamily. In terms of assembly, interacts with the Sec translocase complex via SecD. Specifically interacts with transmembrane segments of nascent integral membrane proteins during membrane integration.

It is found in the cell inner membrane. Functionally, required for the insertion and/or proper folding and/or complex formation of integral membrane proteins into the membrane. Involved in integration of membrane proteins that insert both dependently and independently of the Sec translocase complex, as well as at least some lipoproteins. Aids folding of multispanning membrane proteins. This chain is Membrane protein insertase YidC, found in Salmonella enteritidis PT4 (strain P125109).